The primary structure comprises 142 residues: Large ribosomal subunit protein uL13 (142 aa).

Belongs to the universal ribosomal protein uL13 family. Part of the 50S ribosomal subunit.

This protein is one of the early assembly proteins of the 50S ribosomal subunit, although it is not seen to bind rRNA by itself. It is important during the early stages of 50S assembly. This is Large ribosomal subunit protein uL13 from Baumannia cicadellinicola subsp. Homalodisca coagulata.